The primary structure comprises 146 residues: Hemoglobin subunit beta (146 aa).

The residue at position 1 (V1) is an N-acetylvaline. One can recognise a Globin domain in the interval 2 to 146; the sequence is HLTNEEKTAV…VATALAHKYH (145 aa). The residue at position 44 (S44) is a Phosphoserine. N6-acetyllysine is present on K59. A heme b-binding site is contributed by H63. K82 carries the post-translational modification N6-acetyllysine. Residue H92 coordinates heme b. S-nitrosocysteine is present on C93. K144 carries the N6-acetyllysine modification.

Belongs to the globin family. As to quaternary structure, heterotetramer of two alpha chains and two beta chains. As to expression, red blood cells.

Involved in oxygen transport from the lung to the various peripheral tissues. This Lyroderma lyra (Greater Asian false-vampire bat) protein is Hemoglobin subunit beta (HBB).